An 81-amino-acid chain; its full sequence is Photosystem I iron-sulfur center (81 aa).

4Fe-4S ferredoxin-type domains lie at Ser2–Trp31 and Ile39–Tyr68. Positions 11, 14, 17, 21, 48, 51, 54, and 58 each coordinate [4Fe-4S] cluster.

The eukaryotic PSI reaction center is composed of at least 11 subunits. The cofactor is [4Fe-4S] cluster.

Its subcellular location is the plastid thylakoid membrane. The catalysed reaction is reduced [plastocyanin] + hnu + oxidized [2Fe-2S]-[ferredoxin] = oxidized [plastocyanin] + reduced [2Fe-2S]-[ferredoxin]. Functionally, apoprotein for the two 4Fe-4S centers FA and FB of photosystem I (PSI); essential for photochemical activity. FB is the terminal electron acceptor of PSI, donating electrons to ferredoxin. The C-terminus interacts with PsaA/B/D and helps assemble the protein into the PSI complex. Required for binding of PsaD and PsaE to PSI. PSI is a plastocyanin-ferredoxin oxidoreductase, converting photonic excitation into a charge separation, which transfers an electron from the donor P700 chlorophyll pair to the spectroscopically characterized acceptors A0, A1, FX, FA and FB in turn. The polypeptide is Photosystem I iron-sulfur center (Cuscuta reflexa (Southern Asian dodder)).